The primary structure comprises 293 residues: Elongation factor Ts (293 aa).

Residues 79-82 (TDFV) are involved in Mg(2+) ion dislocation from EF-Tu.

Belongs to the EF-Ts family.

The protein resides in the cytoplasm. Its function is as follows. Associates with the EF-Tu.GDP complex and induces the exchange of GDP to GTP. It remains bound to the aminoacyl-tRNA.EF-Tu.GTP complex up to the GTP hydrolysis stage on the ribosome. This chain is Elongation factor Ts, found in Bacillus licheniformis (strain ATCC 14580 / DSM 13 / JCM 2505 / CCUG 7422 / NBRC 12200 / NCIMB 9375 / NCTC 10341 / NRRL NRS-1264 / Gibson 46).